Reading from the N-terminus, the 238-residue chain is CD63 antigen (238 aa).

Topologically, residues 2–11 (AVEGGMKCVK) are cytoplasmic. Residues 12 to 32 (FLLYVLLLAFCACAVGLIAIG) form a helical membrane-spanning segment. Topologically, residues 33 to 51 (VAVQVVLKQAITHETTAGS) are extracellular. Residues 52-72 (LLPVVIIAVGAFLFLVAFVGC) traverse the membrane as a helical segment. The Cytoplasmic segment spans residues 73-81 (CGACKENYC). A helical transmembrane segment spans residues 82–102 (LMITFAIFLSLIMLVEVAVAI). Residues 103–203 (AGYVFRDQVK…TIAAWLRKNV (101 aa)) are Extracellular-facing. N130, N150, and N172 each carry an N-linked (GlcNAc...) asparagine glycan. The helical transmembrane segment at 204–224 (LLVAGAALGIAFVEVLGIIFS) threads the bilayer. At 225–238 (CCLVKSIRSGYEVM) the chain is on the cytoplasmic side. A Lysosomal targeting motif motif is present at residues 234–238 (GYEVM).

It belongs to the tetraspanin (TM4SF) family. Interacts with TIMP1 and ITGB1 and recruits TIMP1 to ITGB1. Interacts with CD9. Identified in a complex with CD9 and ITGB3. Interacts with PMEL. Interacts with KDR/VEGFR2; identified in a complex with ITGB1 and KDR/VEGFR2 and is required to recruit KDR to ITGB1 complexes. Interacts with SYT7. Palmitoylated at a low, basal level in unstimulated platelets. The level of palmitoylation increases when platelets are activated by thrombin (in vitro). In terms of tissue distribution, detected in mast cells and platelets (at protein level).

The protein localises to the cell membrane. It localises to the lysosome membrane. It is found in the late endosome membrane. The protein resides in the endosome. Its subcellular location is the multivesicular body. The protein localises to the melanosome. It localises to the secreted. It is found in the extracellular exosome. The protein resides in the cell surface. In terms of biological role, functions as a cell surface receptor for TIMP1 and plays a role in the activation of cellular signaling cascades. Plays a role in the activation of ITGB1 and integrin signaling, leading to the activation of AKT, FAK/PTK2 and MAP kinases. Promotes cell survival, reorganization of the actin cytoskeleton, cell adhesion, spreading and migration, via its role in the activation of AKT and FAK/PTK2. Plays a role in VEGFA signaling via its role in regulating the internalization of KDR/VEGFR2. Plays a role in intracellular vesicular transport processes, and is required for normal trafficking of the PMEL luminal domain that is essential for the development and maturation of melanocytes. Plays a role in the adhesion of leukocytes onto endothelial cells via its role in the regulation of SELP trafficking. May play a role in mast cell degranulation in response to Ms4a2/FceRI stimulation, but not in mast cell degranulation in response to other stimuli. The polypeptide is CD63 antigen (Cd63) (Rattus norvegicus (Rat)).